The sequence spans 818 residues: Phosphoinositide phosphatase SAC3 (818 aa).

In terms of domain architecture, SAC spans 153-546 (LCMVDLTKDF…GDTLAHQYGG (394 aa)). The tract at residues 426-459 (SLSSSSDADTGDISPHTSSDDDNGDHDSLEKKSS) is disordered. Positions 482 to 493 (RTNCIDCLDRTN) match the Phosphatase catalytic core motif. Residues 759–780 (LTAETSSTENSVNGVGQSAPTI) are compositionally biased toward polar residues. The tract at residues 759–800 (LTAETSSTENSVNGVGQSAPTISESGSSSSKGKEPMGTKIRE) is disordered. Positions 789–800 (KGKEPMGTKIRE) are enriched in basic and acidic residues.

In terms of assembly, component of the PI(3,5)P2 regulatory complex at least composed of ATG18, SAC/FIG4, FAB1 and VAC14. It depends on Mg(2+) as a cofactor. Ubiquitous with a higher level of expression in young seedlings than in other tissues.

It localises to the vacuole membrane. The catalysed reaction is a 1,2-diacyl-sn-glycero-3-phospho-(1D-myo-inositol-3,5-bisphosphate) + H2O = a 1,2-diacyl-sn-glycero-3-phospho-(1D-myo-inositol-3-phosphate) + phosphate. Its function is as follows. The PI(3,5)P2 regulatory complex regulates both the synthesis and turnover of phosphatidylinositol 3,5-bisphosphate (PtdIns(3,5)P2). This Arabidopsis thaliana (Mouse-ear cress) protein is Phosphoinositide phosphatase SAC3 (SAC3).